Here is a 333-residue protein sequence, read N- to C-terminus: Protein APEM9 (333 aa).

The Cytoplasmic portion of the chain corresponds to methionine 1–alanine 90. The helical transmembrane segment at alanine 91–cysteine 102 threads the bilayer. Residues leucine 103–serine 268 are Peroxisomal-facing. Residues arginine 269 to leucine 285 form a helical membrane-spanning segment. The Cytoplasmic segment spans residues lysine 286 to threonine 333.

As to quaternary structure, interacts with PEX6 and PEX19-1, but not with PEX1. Interacts (via N-terminus) with PEX13, and (via N-terminus and C-terminus) with PEX16. In terms of tissue distribution, expressed in roots, leaves, stems, flowers, buds and fruits.

The protein resides in the peroxisome membrane. Functionally, involved in peroxisome biogenesis and matrix protein import. Required for pollen maturation and in vivo germination via its role in peroxisomal function, which partially involves jasmonic acid biosynthesis. Transported to peroxisomes via the interaction with PEX19-1. Required for peroxisomal protein import by acting as an anchoring protein for the AAA ATPase complex, which consists of PEX1 and PEX6. The protein is Protein APEM9 of Arabidopsis thaliana (Mouse-ear cress).